We begin with the raw amino-acid sequence, 666 residues long: tRNA 5-methylaminomethyl-2-thiouridine biosynthesis bifunctional protein MnmC (666 aa).

The segment at methionine 1–glutamate 245 is tRNA (mnm(5)s(2)U34)-methyltransferase. An FAD-dependent cmnm(5)s(2)U34 oxidoreductase region spans residues isoleucine 270–lysine 666.

This sequence in the N-terminal section; belongs to the methyltransferase superfamily. tRNA (mnm(5)s(2)U34)-methyltransferase family. The protein in the C-terminal section; belongs to the DAO family. FAD serves as cofactor.

It is found in the cytoplasm. It catalyses the reaction 5-aminomethyl-2-thiouridine(34) in tRNA + S-adenosyl-L-methionine = 5-methylaminomethyl-2-thiouridine(34) in tRNA + S-adenosyl-L-homocysteine + H(+). Catalyzes the last two steps in the biosynthesis of 5-methylaminomethyl-2-thiouridine (mnm(5)s(2)U) at the wobble position (U34) in tRNA. Catalyzes the FAD-dependent demodification of cmnm(5)s(2)U34 to nm(5)s(2)U34, followed by the transfer of a methyl group from S-adenosyl-L-methionine to nm(5)s(2)U34, to form mnm(5)s(2)U34. The sequence is that of tRNA 5-methylaminomethyl-2-thiouridine biosynthesis bifunctional protein MnmC from Salmonella paratyphi B (strain ATCC BAA-1250 / SPB7).